The sequence spans 247 residues: Sugar fermentation stimulation protein homolog (247 aa).

This sequence belongs to the SfsA family.

This is Sugar fermentation stimulation protein homolog from Methanococcoides burtonii (strain DSM 6242 / NBRC 107633 / OCM 468 / ACE-M).